The sequence spans 499 residues: Maturase K (499 aa).

It belongs to the intron maturase 2 family. MatK subfamily.

The protein localises to the plastid. The protein resides in the chloroplast. Functionally, usually encoded in the trnK tRNA gene intron. Probably assists in splicing its own and other chloroplast group II introns. In Chamaecrista fasciculata (Showy partridge pea), this protein is Maturase K.